The following is a 398-amino-acid chain: 2-amino-3-ketobutyrate coenzyme A ligase (398 aa).

A pyridoxal 5'-phosphate-binding site is contributed by 111-112 (CF). Histidine 136 is a binding site for substrate. Pyridoxal 5'-phosphate is bound by residues serine 185, 210 to 213 (DDSH), 241 to 244 (TLGK), and 274 to 275 (SN). Lysine 244 is subject to N6-(pyridoxal phosphate)lysine. Residue arginine 368 coordinates substrate.

It belongs to the class-II pyridoxal-phosphate-dependent aminotransferase family. Homodimer. Pyridoxal 5'-phosphate is required as a cofactor.

It carries out the reaction glycine + acetyl-CoA = (2S)-2-amino-3-oxobutanoate + CoA. The protein operates within amino-acid degradation; L-threonine degradation via oxydo-reductase pathway; glycine from L-threonine: step 2/2. Its function is as follows. Catalyzes the cleavage of 2-amino-3-ketobutyrate to glycine and acetyl-CoA. This chain is 2-amino-3-ketobutyrate coenzyme A ligase, found in Salmonella typhimurium (strain LT2 / SGSC1412 / ATCC 700720).